The chain runs to 2197 residues: RNA1 polyprotein (2197 aa).

The Cytoplasmic segment spans residues 621–1167; that stretch reads GLTDVFGVPL…YDWVYANGGK (547 aa). The region spanning 766–933 is the SF3 helicase domain; sequence VKRLSDLHKR…EGVAYNPSDP (168 aa). An ATP-binding site is contributed by 796-803; sequence GGPRCGKS. Residues 1168–1188 form a helical membrane-spanning segment; that stretch reads LLLVLAAVILILFFGSACIKL. Over 1189–1212 the chain is Lumenal; that stretch reads MQAIFCGAAGGTVSMAAVGKMTVQ. An N-linked (GlcNAc...) asparagine; by host glycan is attached at asparagine 1228. Positions 1243–1475 constitute a Peptidase C3 domain; that stretch reads LAEAQFNESH…MPRYISHASF (233 aa). Active-site for picornain 3C-like protease activity residues include histidine 1283, glutamate 1331, and cysteine 1433. One can recognise a RdRp catalytic domain in the interval 1765–1888; that stretch reads SVALNCDYSR…SIKPDTMKYF (124 aa).

The protein belongs to the nepoviruses RNA1 polyprotein family. In terms of processing, specific enzymatic cleavages by picornain 3C-like protease in vivo yield mature proteins. Picornain 3C-like protease is autocatalytically processed. NTB exists as NTB-VPg polyprotein as well as NTB mature protein. Post-translationally, VPg is uridylylated by the polymerase and is covalently linked to the 5'-end of genomic RNA. This uridylylated form acts as a nucleotide-peptide primer for the polymerase.

It localises to the host endoplasmic reticulum lumen. The protein localises to the host endoplasmic reticulum membrane. The enzyme catalyses RNA(n) + a ribonucleoside 5'-triphosphate = RNA(n+1) + diphosphate. Its function is as follows. Picornain 3C-like protease is a thiol protease that cleaves at Gln-|-Gly or Gln-|-Ser sites in the P1 and P2 polyproteins. Functionally, the VPg-NTB polyprotein may act as a membrane-anchor for the replication complex. The polypeptide is RNA1 polyprotein (Tomato ringspot virus (isolate raspberry) (ToRSV)).